The sequence spans 187 residues: Large ribosomal subunit protein bL32m (187 aa).

Zn(2+) contacts are provided by C109, C112, C122, and C125.

Belongs to the bacterial ribosomal protein bL32 family. As to quaternary structure, component of the mitochondrial ribosome large subunit (39S) which comprises a 16S rRNA and about 50 distinct proteins. MRPL32 precursor is processed by the m-AAA protease (composed of AFG3L2 and SPG7), which cleaves the N-terminal transit peptide. Cleavage by the m-AAA protease takes place prior to assembly into the large subunit, an essential step for mitochondrial ribosome (mitoribosome) assembly. Proper processing by the m-AAA protease is dependent on the zinc-binding region within the tightly folded C-terminal domain of MRPL32: zinc-dependent folding halts degradation initiated from the N-terminus and triggers the release of mature MRPL32.

The protein resides in the mitochondrion. Functionally, component of the mitochondrial large ribosomal subunit (mt-LSU). The mitochondrial ribosome (mitoribosome) is a large ribonucleoprotein complex responsible for the synthesis of proteins inside mitochondria. This chain is Large ribosomal subunit protein bL32m (Mrpl32), found in Mus musculus (Mouse).